A 186-amino-acid polypeptide reads, in one-letter code: Elongation factor P (186 aa).

Belongs to the elongation factor P family.

The protein localises to the cytoplasm. It participates in protein biosynthesis; polypeptide chain elongation. Involved in peptide bond synthesis. Stimulates efficient translation and peptide-bond synthesis on native or reconstituted 70S ribosomes in vitro. Probably functions indirectly by altering the affinity of the ribosome for aminoacyl-tRNA, thus increasing their reactivity as acceptors for peptidyl transferase. The sequence is that of Elongation factor P from Streptococcus thermophilus (strain CNRZ 1066).